The sequence spans 480 residues: MNYKKSAENILQALGGEDNVEAMTHCATRLRLVLKDEGLVDEKALGDMDVVKGTFSTGGQYQVIIGSGTVNKVFSELEKITGKEASSVSEVKTQGTKNMNPFQRFVKMLSDIFVPIIPAIVAGGLLMGINNILTAPGIFYDNQSLIEVQNQFSGLAEMINIFANAPFTLLPILIGFSAAKRFGGNAYLGAALGMILVHPELMSAYDYPKALEAGKEIPHWNLFGLEINQVGYQGQVLPMLVATYILATIEKGLRKVIPTVLDNLLTPLLAILSTGFITFSFVGPLTRTLGYWLSDGLTWLYEFGGAIGGLIFGLLYAPIVITGMHHSFIAIETQLIADSSSTGGSFIFPIATMSNIAQGAAALAAFFIIKENKKLKGVASAAGVSALLGITEPAMFGVNLKLRYPFIGAIVGSGIGSAYIAFFKVKAIALGTAGIPGFISISGQNNGWLHYGIAMIIAFIVAFGVTYALSYRKKYRNIEA.

The PTS EIIB type-1 domain maps to Lys4–Ser87. Cys26 serves as the catalytic Phosphocysteine intermediate; for EIIB activity. The next 8 membrane-spanning stretches (helical) occupy residues Leu109–Ile129, Met158–Ala178, Phe182–Met202, Leu264–Pro284, Phe303–Gly323, Pro349–Ile369, Pro405–Val425, and Leu449–Leu469. Residues Ile120 to Ala480 form the PTS EIIC type-1 domain.

The protein resides in the cell membrane. It catalyses the reaction N(pros)-phospho-L-histidyl-[protein](out) + sucrose = sucrose 6(G)-phosphate(in) + L-histidyl-[protein]. Functionally, the phosphoenolpyruvate-dependent sugar phosphotransferase system (sugar PTS), a major carbohydrate active transport system, catalyzes the phosphorylation of incoming sugar substrates concomitantly with their translocation across the cell membrane. This system is involved in sucrose transport. The protein is PTS system sucrose-specific EIIBC component of Staphylococcus xylosus.